Reading from the N-terminus, the 926-residue chain is DNA mismatch repair protein MutS (926 aa).

The disordered stretch occupies residues 16–40; sequence VASTPTRRGRPPGSSAARASNGAGS. The segment covering 26–40 has biased composition (low complexity); that stretch reads PPGSSAARASNGAGS. Residue 658–665 coordinates ATP; sequence GPNMAGKS.

It belongs to the DNA mismatch repair MutS family.

In terms of biological role, this protein is involved in the repair of mismatches in DNA. It is possible that it carries out the mismatch recognition step. This protein has a weak ATPase activity. In Granulibacter bethesdensis (strain ATCC BAA-1260 / CGDNIH1), this protein is DNA mismatch repair protein MutS.